We begin with the raw amino-acid sequence, 534 residues long: Calcium uptake protein 1 homolog, mitochondrial (534 aa).

Residues 1–32 (MLHCSFLRVIPIKNASKRLIIVRSLTSAPAKT) constitute a mitochondrion transit peptide. The disordered stretch occupies residues 131 to 150 (PEASQKEEVTESNGEVEEVK). EF-hand domains lie at 271-306 (TSHADFALAFKIFDVDGNGALDKEEFTKVQQLIMSQ), 338-359 (KDGKGSLSSEKFIEFQERLQHD), and 466-501 (LSDHVVDVVITLFDDNLDGKLSHEEMVAVMRRRMRR). Residues Asp-284, Asp-286, Asn-288, and Glu-295 each contribute to the Ca(2+) site.

The protein belongs to the MICU1 family. MICU1 subfamily. As to expression, expressed at low levels in PLM touch receptor neurons, germ cells, epidermis, and muscles.

Its subcellular location is the mitochondrion intermembrane space. It localises to the mitochondrion inner membrane. Its function is as follows. Calcium sensor of the mitochondrial calcium uniporter (mcu-1) channel, which senses calcium level via its EF-hand domains. At low calcium levels, micu-1 occludes the pore of the mcu-1 channel, preventing mitochondrial calcium uptake. At higher calcium levels, calcium-binding to micu-1 induces a conformational change that weakens mcu-1-micu-1 interactions and moves micu-1 away from the pore, allowing calcium permeation through the mcu-1 channel. Also required to protect against manganese toxicity by preventing manganese uptake by mcu-1. Modulates the activity of the mitochondrial calcium uniporter protein mcu-1 depending on the level of intracellular calcium in PLM touch receptor neurons following axonal injury. The sequence is that of Calcium uptake protein 1 homolog, mitochondrial from Caenorhabditis elegans.